The primary structure comprises 389 residues: Phosphatidylglycerol--prolipoprotein diacylglyceryl transferase (389 aa).

The next 4 helical transmembrane spans lie at 28 to 48 (IIVA…LIYF), 58 to 78 (FFIF…YFLI), 98 to 118 (LAIQ…FNVF), and 148 to 168 (ISVF…QAIG). Position 169 (Arg169) interacts with a 1,2-diacyl-sn-glycero-3-phospho-(1'-sn-glycerol). Transmembrane regions (helical) follow at residues 220–240 (IPLF…IYFV), 281–301 (IVFS…CQTL), and 309–329 (FWTY…TTLF).

The protein belongs to the Lgt family.

Its subcellular location is the cell membrane. The catalysed reaction is L-cysteinyl-[prolipoprotein] + a 1,2-diacyl-sn-glycero-3-phospho-(1'-sn-glycerol) = an S-1,2-diacyl-sn-glyceryl-L-cysteinyl-[prolipoprotein] + sn-glycerol 1-phosphate + H(+). Its pathway is protein modification; lipoprotein biosynthesis (diacylglyceryl transfer). Its function is as follows. Catalyzes the transfer of the diacylglyceryl group from phosphatidylglycerol to the sulfhydryl group of the N-terminal cysteine of a prolipoprotein, the first step in the formation of mature lipoproteins. This is Phosphatidylglycerol--prolipoprotein diacylglyceryl transferase from Mycoplasma pneumoniae (strain ATCC 29342 / M129 / Subtype 1) (Mycoplasmoides pneumoniae).